We begin with the raw amino-acid sequence, 527 residues long: MASDFLPVRRALLSVSDKTGLIDLARALVARNVELLSTGGTAKAIREAGLPVKDVAELTGFPEMMDGRVKTLHPLVHGGLLGRAGIDEAVMAEHGIAPIDLLVLNLYPFESVTVKTDCTLADAVENIDIGGPAMLRSAAKNFARVAVATDPAQYADLLAELEANNGQLSAAKRFALSVAAFNRVAQYDAAISNYLSAVADSAETVPTRNPFPAQINSNFVKVMDLRYGENPHQSGAFYRDLYPVPGTLATFQQLQGKELSYNNLADADAAWECVRQFDAPACVIVKHANPCGVAVGAGCGDAYELAYATDPTSAFGSILAFNKTLDAATAKAILDRQFVEVLIAPDYDAGALDYATKKANVRVLKIPHGNGLNNYDTKRIGSGLLMQSADNRGMSLGELSVVTQRAPSEAELGDLLFAWRVAKYVKSNAIVYAKDSRTIGVGAGQMSRVVSAKIAALKAEEAKLTVVGSVMASDAFFPFRDGIDAAASAGIQAVIQPGGSMRDGEVIAAADEHGIAMVFTGVRHFRH.

The MGS-like domain maps to 1–149; sequence MASDFLPVRR…KNFARVAVAT (149 aa).

It belongs to the PurH family.

It carries out the reaction (6R)-10-formyltetrahydrofolate + 5-amino-1-(5-phospho-beta-D-ribosyl)imidazole-4-carboxamide = 5-formamido-1-(5-phospho-D-ribosyl)imidazole-4-carboxamide + (6S)-5,6,7,8-tetrahydrofolate. It catalyses the reaction IMP + H2O = 5-formamido-1-(5-phospho-D-ribosyl)imidazole-4-carboxamide. Its pathway is purine metabolism; IMP biosynthesis via de novo pathway; 5-formamido-1-(5-phospho-D-ribosyl)imidazole-4-carboxamide from 5-amino-1-(5-phospho-D-ribosyl)imidazole-4-carboxamide (10-formyl THF route): step 1/1. The protein operates within purine metabolism; IMP biosynthesis via de novo pathway; IMP from 5-formamido-1-(5-phospho-D-ribosyl)imidazole-4-carboxamide: step 1/1. The chain is Bifunctional purine biosynthesis protein PurH from Xanthomonas oryzae pv. oryzae (strain MAFF 311018).